A 319-amino-acid polypeptide reads, in one-letter code: MKLSRISAINWNKISDDKDLEVWNRLTSNFWLPEKVPLSNDIPAWQTLTVVEQQLTMRVFTGLTLLDTLQNVIGAPSLMPDALTPHEEAVLSNISFMEAVHARSYSSIFSTLCQTKDVDAAYAWSEENAPLQRKAQIIQQHYRGDDPLKKKIASVFLESFLFYSGFWLPMYFSSRGKLTNTADLIRLIIRDEAVHGYYIGYKYQKNMEKISLGQREELKSFAFDLLLELYDNELQYTDELYAETPWADDVKAFLCYNANKALMNLGYEPLFPAEMAEVNPAILAALSPNADENHDFFSGSGSSYVMGKAVETEDEDWNF.

Asp67, Glu98, and His101 together coordinate Fe cation. Residue Tyr105 is part of the active site. Glu158, Glu192, and His195 together coordinate Fe cation.

It belongs to the ribonucleoside diphosphate reductase small chain family. Tetramer of two alpha and two beta subunits. It depends on Fe cation as a cofactor.

The enzyme catalyses a 2'-deoxyribonucleoside 5'-diphosphate + [thioredoxin]-disulfide + H2O = a ribonucleoside 5'-diphosphate + [thioredoxin]-dithiol. Provides the precursors necessary for DNA synthesis. Catalyzes the biosynthesis of deoxyribonucleotides from the corresponding ribonucleotides. R2F contains the tyrosyl radical required for catalysis. The protein is Ribonucleoside-diphosphate reductase 2 subunit beta (nrdF) of Escherichia coli (strain K12).